The primary structure comprises 649 residues: Transcription factor E2-alpha (649 aa).

Disordered regions lie at residues 37-107 (RPAS…SERN), 132-207 (GLSS…AKTP), 296-325 (TYSG…SSSG), and 339-376 (DHSS…ALSP). Positions 57–71 (SESWGNSEQNSSSFD) are enriched in polar residues. Over residues 132-148 (GLSSPGPLSPSGVKSSS) the composition is skewed to low complexity. Phosphoserine is present on residues S135 and S140. The Nuclear localization signal signature appears at 171–177 (PKKVRKV). Low complexity predominate over residues 339-352 (DHSSNNFSPSPSTP). Residue T351 is modified to Phosphothreonine. S355 is subject to Phosphoserine. R367 bears the Omega-N-methylarginine mark. S375 carries the post-translational modification Phosphoserine. The tract at residues 385-420 (LSKMEDRLDEAIHVLRSHAVGTASELHGLLPGHSTL) is leucine-zipper. The segment at 435-547 (AGLVSGSHPE…KAEREKERRV (113 aa)) is disordered. The segment covering 459–477 (SLPSQPSSLPDLSQRPPDS) has biased composition (low complexity). Residue K494 forms a Glycyl lysine isopeptide (Lys-Gly) (interchain with G-Cter in SUMO2) linkage. The residue at position 524 (S524) is a Phosphoserine. At D526 the chain carries Phosphothreonine. Residues 537-547 (QKAEREKERRV) show a composition bias toward basic and acidic residues. Residues 544–597 (ERRVANNARERLRVRDINEAFKELGRMCQLHLSTEKPQTKLLILHQAVAVILSL) enclose the bHLH domain. K620 participates in a covalent cross-link: Glycyl lysine isopeptide (Lys-Gly) (interchain with G-Cter in SUMO2).

As to quaternary structure, homodimer. Heterodimer; efficient DNA binding requires dimerization with another bHLH protein. Forms a heterodimer with TWIST1 and TWIST2. Forms a heterodimer with NEUROD1; the heterodimer is inhibited in presence of ID2, but not NR0B2, to E-box element. Forms a heterodimer with TCF15; the heterodimer binds E-box element. Forms a heterodimer with MYOG; heterodimerization enhances MYOG DNA-binding and transcriptional activities. Forms a heterodimer with ATOH8; repress transcription of TCF3 and TCF3-NEUROG3 dimer-induced transactivation of E box-dependent promoters. Component of a nuclear TAL-1 complex composed at least of CBFA2T3, LDB1, TAL1 and TCF3. Interacts with NEUROD2. Interacts with EP300. Interacts with PTF1A, TGFB1I1. Interacts with UBE2I. Interacts with BHLHA9. Interacts with ASB2; the interaction is mediated by SKP2 and targets TCF3 for Notch-induced proteasomal degradation. Interacts with transcription factor ASCL5/AmeloD. In terms of assembly, interacts with RALGAPA1. Interacts with FIGLA. Forms a heterodimer with ATOH7; required for ATOH7 DNA-binding. Phosphorylated following NGF stimulation. Post-translationally, undergoes Notch-induced ubiquitination and subsequent proteasomal degradation which is mediated by ASB1 or ASB2, the substrate-recognition components of probable ECS E3 ubiquitin-protein ligase complexes.

Its subcellular location is the nucleus. Functionally, transcriptional regulator involved in the initiation of neuronal differentiation and mesenchymal to epithelial transition. Heterodimers between TCF3 and tissue-specific basic helix-loop-helix (bHLH) proteins play major roles in determining tissue-specific cell fate during embryogenesis, like muscle or early B-cell differentiation. Together with TCF15, required for the mesenchymal to epithelial transition. Dimers bind DNA on E-box motifs: 5'-CANNTG-3'. Binds to the kappa-E2 site in the kappa immunoglobulin gene enhancer. Binds to the consensus sequence CAC/GCTGT/C present, in the chymotrypsin, insulin, AP-4, and several other gene enhancer motifs. Facilitates ATOH7 binding to DNA at the consensus sequence 5'-CAGGTG-3', and positively regulates transcriptional activity. This Rattus norvegicus (Rat) protein is Transcription factor E2-alpha (Tcf3).